Here is a 527-residue protein sequence, read N- to C-terminus: Inorganic phosphate transporter 1-1 (527 aa).

Topologically, residues 1–21 (MAGGQLNVLSTLDQAKTQWYH) are cytoplasmic. A helical membrane pass occupies residues 22–42 (FMAIVIAGMGFFTDAYDLFCI). Topologically, residues 43 to 70 (SLVTKLLGRIYYTDDSKDTPGALPPNVS) are extracellular. A helical membrane pass occupies residues 71–91 (AAVTGVALCGTLAGQLFFGWL). Over 92–99 (GDKLGRKS) the chain is Cytoplasmic. A helical membrane pass occupies residues 100-120 (VYGFTLILMVVCSVASGLSFG). Over 121–124 (SSAK) the chain is Extracellular. A helical transmembrane segment spans residues 125–145 (GVVSTLCFFRFWLGFGIGGDY). Over 146-163 (PLSATIMSEYANKRTRGA) the chain is Cytoplasmic. A helical transmembrane segment spans residues 164–184 (FIAAVFAMQGFGILFGAIVAL). Over 185–211 (AVSAGFRHAYPAPSYSDNHAASLVPQA) the chain is Extracellular. The chain crosses the membrane as a helical span at residues 212-232 (DYVWRIILMFGTVPAALTYYW). Residues 233–292 (RMKMPETARYTALIARNAKQAAADMSKVLHTQIEESADRAETVAVGGESWGLFSRQFLRR) lie on the Cytoplasmic side of the membrane. A helical membrane pass occupies residues 293 to 313 (HGLHLLATTSTWFLLDIAFYS). The Extracellular segment spans residues 314–348 (QNLFQKDIFSKVGWIPPAKTMNALEELYRIARAQA). Residues 349–369 (LIALCGTIPGYWFTVAFIEIM) traverse the membrane as a helical segment. Residues 370–371 (GR) are Cytoplasmic-facing. A helical transmembrane segment spans residues 372–392 (FWIQIMGFAMMTAFMLGLAIP). At 393-405 (YHHWTTPGHHTGF) the chain is on the extracellular side. The chain crosses the membrane as a helical span at residues 406-426 (IVMYGFTFFFANFGPNSTTFI). Topologically, residues 427 to 442 (VPAEIYPARLRSTCHG) are cytoplasmic. The helical transmembrane segment at 443-463 (ISAAAGKAGAIIGAFGFLYAA) threads the bilayer. Residues 464 to 481 (QDQHKPEPGYPRGIGIKN) are Extracellular-facing. A helical transmembrane segment spans residues 482-502 (ALFVLAGTNFLGTIMTLLVPE). Residues 503–527 (SKGMSLEVISQEVADGDDEEAAYPK) are Cytoplasmic-facing.

The protein belongs to the major facilitator superfamily. Phosphate:H(+) symporter (TC 2.A.1.9) family. Expressed in roots, stems and leaves.

The protein localises to the membrane. Its function is as follows. High-affinity transporter for external inorganic phosphate. Required for phosphate acquisition in plant. The protein is Inorganic phosphate transporter 1-1 (PHT1-1) of Oryza sativa subsp. japonica (Rice).